The primary structure comprises 270 residues: Tryptophan synthase alpha chain (270 aa).

Residues E49 and D60 each act as proton acceptor in the active site.

The protein belongs to the TrpA family. In terms of assembly, tetramer of two alpha and two beta chains.

The enzyme catalyses (1S,2R)-1-C-(indol-3-yl)glycerol 3-phosphate + L-serine = D-glyceraldehyde 3-phosphate + L-tryptophan + H2O. The protein operates within amino-acid biosynthesis; L-tryptophan biosynthesis; L-tryptophan from chorismate: step 5/5. In terms of biological role, the alpha subunit is responsible for the aldol cleavage of indoleglycerol phosphate to indole and glyceraldehyde 3-phosphate. The chain is Tryptophan synthase alpha chain from Pseudomonas fluorescens (strain ATCC BAA-477 / NRRL B-23932 / Pf-5).